The chain runs to 236 residues: MTRRYWNINLEEMMEAGVHFGHGTRKWNPKMEPYISAKRKGIHITNLTRTARFLSEACDLVFDAGSRGKQFLIVGTKNKAADSVAWAAIRARCHYVNKKWLGGMLTNWSTTETRLHKFRDLRMEQKTGRLNRLPKRDAAMLKRQLSRLQTYLGGIKYMTGLPDIVIIIDQHEEYTALRECITLGIPTICLIDTNCDPDLADISIPANDDAISSIRLILNKLVFAICEGRSSYIRNP.

It belongs to the universal ribosomal protein uS2 family.

Its subcellular location is the plastid. The protein localises to the chloroplast. The protein is Small ribosomal subunit protein uS2c (rps2) of Coffea arabica (Arabian coffee).